Reading from the N-terminus, the 466-residue chain is MTQPASVRWQLWIVAFGFFMQTLDTTIVNTALPSMAASLNESPLHMHSVIVSYVLTVAVMLPASGWLADRIGVKNIFFAAILLFTLGSLLCARSETLDELLISRVIQGIGGAMMVPVGRLTVMKIVPRDQYMAAMTFVTLPGQIGPLLGPALGGFLVEYASWHWIFLINLPVGIIGALATWFLMPNYTMQTQRFDISGFVWLAVGMATLTLALDGNRSLGIPPIAIFALIAIGLIALLSYWLHARRNERALFNLRLFDTHTFSIGLTGGLLARIGSGMLPFMTPLFLQLGMGFSPFHAGLMMVPMVLGSMGIKRVVVQIVNRFGYRRVLVASTLLLALVTALFALVALMQWIWMIPVVLFFLGTVNAIRFSTMNTLTLKDLPDPLASGGNSLLSMTMQLSTSLGVSIAGILLGIFSQPHIAAESGATHTVFLYTYLSMVVIIALPALIFNRVPPDTLKQSTLARKS.

14 consecutive transmembrane segments (helical) span residues 11–31, 48–68, 71–91, 105–125, 137–157, 164–184, 194–214, 218–238, 262–282, 292–312, 328–347, 351–370, 402–422, and 429–449; these read LWIVAFGFFMQTLDTTIVNTA, SVIVSYVLTVAVMLPASGWLA, IGVKNIFFAAILLFTLGSLLC, VIQGIGGAMMVPVGRLTVMKI, FVTLPGQIGPLLGPALGGFLV, WIFLINLPVGIIGALATWFLM, FDISGFVWLAVGMATLTLALD, SLGIPPIAIFALIAIGLIALL, FSIGLTGGLLARIGSGMLPFM, GFSPFHAGLMMVPMVLGSMGI, VLVASTLLLALVTALFALVA, WIWMIPVVLFFLGTVNAIRF, SLGVSIAGILLGIFSQPHIAA, and TVFLYTYLSMVVIIALPALIF.

This sequence belongs to the major facilitator superfamily. TCR/Tet family.

The protein localises to the cell inner membrane. The chain is Putative multidrug resistance protein MdtD from Pectobacterium atrosepticum (strain SCRI 1043 / ATCC BAA-672) (Erwinia carotovora subsp. atroseptica).